We begin with the raw amino-acid sequence, 182 residues long: Large ribosomal subunit protein uL16 (182 aa).

This sequence belongs to the universal ribosomal protein uL16 family. Part of the 50S ribosomal subunit.

The chain is Large ribosomal subunit protein uL16 from Thermococcus kodakarensis (strain ATCC BAA-918 / JCM 12380 / KOD1) (Pyrococcus kodakaraensis (strain KOD1)).